Reading from the N-terminus, the 64-residue chain is MEIVVDAIYEKGVLKLKKSINLPEGCEVEIKIIPKKISEKTFGILKLSDKEIKEILEEIENGGE.

The protein belongs to the UPF0165 family.

In terms of biological role, possibly the antitoxin component of a type II toxin-antitoxin (TA) system. Its cognate toxin is VapC2 (Potential). The polypeptide is Putative antitoxin MJ0975 (vapB2) (Methanocaldococcus jannaschii (strain ATCC 43067 / DSM 2661 / JAL-1 / JCM 10045 / NBRC 100440) (Methanococcus jannaschii)).